The sequence spans 164 residues: Photosystem II extrinsic protein V (164 aa).

Residues 1 to 27 (MALKSKFLVGSILATFILNGFSSPAQA) form the signal peptide. Residues cysteine 64, cysteine 67, histidine 68, and histidine 119 each contribute to the heme c site.

Belongs to the cytochrome c family. PsbV subfamily. PSII is composed of 1 copy each of membrane proteins PsbA, PsbB, PsbC, PsbD, PsbE, PsbF, PsbH, PsbI, PsbJ, PsbK, PsbL, PsbM, PsbT, PsbY, PsbZ, Psb30/Ycf12, at least 3 peripheral proteins of the oxygen-evolving complex and a large number of cofactors. It forms dimeric complexes. The cofactor is heme c.

It is found in the plastid. It localises to the chloroplast thylakoid membrane. One of the extrinsic, lumenal subunits of photosystem II (PSII). PSII is a light-driven water plastoquinone oxidoreductase, using light energy to abstract electrons from H(2)O, generating a proton gradient subsequently used for ATP formation. The extrinsic proteins stabilize the structure of photosystem II oxygen-evolving complex (OEC), the ion environment of oxygen evolution and protect the OEC against heat-induced inactivation. The sequence is that of Photosystem II extrinsic protein V from Emiliania huxleyi (Coccolithophore).